The following is a 493-amino-acid chain: tRNA(Ile)-lysidine synthase (493 aa).

ATP is bound at residue 26–31 (SGGSDS).

The protein belongs to the tRNA(Ile)-lysidine synthase family.

The protein resides in the cytoplasm. It carries out the reaction cytidine(34) in tRNA(Ile2) + L-lysine + ATP = lysidine(34) in tRNA(Ile2) + AMP + diphosphate + H(+). Its function is as follows. Ligates lysine onto the cytidine present at position 34 of the AUA codon-specific tRNA(Ile) that contains the anticodon CAU, in an ATP-dependent manner. Cytidine is converted to lysidine, thus changing the amino acid specificity of the tRNA from methionine to isoleucine. In Bartonella henselae (strain ATCC 49882 / DSM 28221 / CCUG 30454 / Houston 1) (Rochalimaea henselae), this protein is tRNA(Ile)-lysidine synthase.